Consider the following 77-residue polypeptide: Cysteine-rich protein 1 (77 aa).

The region spanning 2 to 63 is the LIM zinc-binding domain; it reads PKCPKCDKEV…HPCYSAMFGP (62 aa). An N6-acetyllysine mark is found at Lys9 and Lys22. Position 68 is an omega-N-methylarginine (Arg68).

Its function is as follows. Seems to have a role in zinc absorption and may function as an intracellular zinc transport protein. This is Cysteine-rich protein 1 (Crip1) from Mus musculus (Mouse).